A 482-amino-acid polypeptide reads, in one-letter code: Replication factor C large subunit (482 aa).

46 to 53 (GPPGSGKT) is a binding site for ATP. The tract at residues 420–482 (EKETPKKKKK…KKQATLDSFF (63 aa)) is disordered. Residues 442 to 476 (KISEPPKEPLKEVIEETVEKTDKKEKEKKDPKKQA) show a composition bias toward basic and acidic residues.

It belongs to the activator 1 small subunits family. RfcL subfamily. Heteromultimer composed of small subunits (RfcS) and large subunits (RfcL).

Part of the RFC clamp loader complex which loads the PCNA sliding clamp onto DNA. This Methanococcus maripaludis (strain C7 / ATCC BAA-1331) protein is Replication factor C large subunit.